Consider the following 344-residue polypeptide: MIFGGAFDPLHQAHIYIAKRAVQAIKAQKLYFVPTAKAFFKSPIKASNQARLAMLRVALKALPQMAVSNFDIKAQNGFSFNTVQHFKQRFPNAELYFLIGSDKLSELAKWHNIEQLQKLCRFVCYERFGYPIDEQLVQQFNVRLLGKCPLDLASSEMFGSHKFRQIPAKVLHYIHQHNIYLKTILQTLLDEPRMQHCLRVGQLAKTLAVANKLDGKTAYTAGAYHDLAKQLPQAQLEKLAKVAGVNDYPSWKVLHSYAGAYILKHWYGLNNSAVFSAIWNHTVPPQKMSQLDMIIYLADKLEPMRVHEEWAKGIDITALVKLAKKDLKLAYQITLKYVRSLQKN.

Residues 1–182 (MIFGGAFDPL…YIHQHNIYLK (182 aa)) are naMN adenylyltransferase. The tract at residues 191-344 (EPRMQHCLRV…LKYVRSLQKN (154 aa)) is ap4A hydrolase. Residues 193–304 (RMQHCLRVGQ…IYLADKLEPM (112 aa)) enclose the HD domain. His-196 provides a ligand contact to ADP. Residues His-196, His-225, and Asp-226 each contribute to the Fe cation site. ADP contacts are provided by residues 226 to 229 (DLAK), His-255, 281 to 282 (HT), Asp-299, and Arg-305. Position 299 (Asp-299) interacts with Fe cation.

It in the N-terminal section; belongs to the NadD family. In the C-terminal section; belongs to the Ap4A hydrolase YqeK family.

The catalysed reaction is nicotinate beta-D-ribonucleotide + ATP + H(+) = deamido-NAD(+) + diphosphate. It catalyses the reaction P(1),P(4)-bis(5'-adenosyl) tetraphosphate + H2O = 2 ADP + 2 H(+). It participates in cofactor biosynthesis; NAD(+) biosynthesis; deamido-NAD(+) from nicotinate D-ribonucleotide: step 1/1. Functionally, catalyzes the reversible adenylation of nicotinate mononucleotide (NaMN) to nicotinic acid adenine dinucleotide (NaAD). In terms of biological role, hydrolyzes diadenosine 5',5'''-P1,P4-tetraphosphate (Ap4A) to yield ADP. The protein is Probable nicotinate-nucleotide adenylyltransferase/Ap4A hydrolase of Mycoplasma pneumoniae (strain ATCC 29342 / M129 / Subtype 1) (Mycoplasmoides pneumoniae).